A 125-amino-acid chain; its full sequence is SOSS complex subunit C homolog (125 aa).

Residues 43–77 (MPSPQLLGQPTVAPEFLPQGVGLPTNATPPRSAFN) are disordered. Positions 67 to 77 (TNATPPRSAFN) are enriched in polar residues.

It belongs to the SOSS-C family.

The chain is SOSS complex subunit C homolog from Drosophila persimilis (Fruit fly).